Here is a 479-residue protein sequence, read N- to C-terminus: MDKLINKPQPLTSDISTSGFIYFAVVFVAIMGYLLFKNLLFLFFFKRYPKNTPKIGVGNITTIAMIIAVAVSIVLVLMALAGGLAAALFRGYPGFRVTLELILVKISGLLFGPIVGIFSAATIDFLTVIFSGGVFNVGYVLGAILTGMIAGILREVLISTALLHNRNLSDFAYLVLSIGMVIAAFLITQFFVLGISNNLKEIKGDEEFRLKFNAPSIVFELSLTQYANILLYFTIAIVIAMLVLYIVWLVKQRHLSFEHSRFFYRSYKHANHQFTLFVLTKENWFYLILNVITLASTSLLMINIAFIPIFDTQTTGQTYEFWLLARLLFAPVIFLLDIIVIYPILLLLTPLMLKGFKTAVSKNQRKTLKQSFTDLQSVVLPIINKRKHQQLRQEELKRLARATHFDLTEGEMEKLLVEFKTITQSFDRVMNIDTTSVEPMYAPFNTSPTPLRKDKVIVEKHPEKLLANCKEMSVGFVKV.

The next 8 helical transmembrane spans lie at 25–45, 63–83, 110–130, 133–153, 175–195, 229–249, 287–307, and 328–348; these read VVFVAIMGYLLFKNLLFLFFF, IAMIIAVAVSIVLVLMALAGG, LFGPIVGIFSAATIDFLTVIF, GVFNVGYVLGAILTGMIAGIL, VLSIGMVIAAFLITQFFVLGI, ILLYFTIAIVIAMLVLYIVWL, LILNVITLASTSLLMINIAFI, and LFAPVIFLLDIIVIYPILLLL.

The protein in the C-terminal section; belongs to the GatC family.

It localises to the cell membrane. This is an uncharacterized protein from Mycoplasma pneumoniae (strain ATCC 29342 / M129 / Subtype 1) (Mycoplasmoides pneumoniae).